Reading from the N-terminus, the 477-residue chain is Aspartyl/glutamyl-tRNA(Asn/Gln) amidotransferase subunit B (477 aa).

It belongs to the GatB/GatE family. GatB subfamily. In terms of assembly, heterotrimer of A, B and C subunits.

It carries out the reaction L-glutamyl-tRNA(Gln) + L-glutamine + ATP + H2O = L-glutaminyl-tRNA(Gln) + L-glutamate + ADP + phosphate + H(+). The catalysed reaction is L-aspartyl-tRNA(Asn) + L-glutamine + ATP + H2O = L-asparaginyl-tRNA(Asn) + L-glutamate + ADP + phosphate + 2 H(+). In terms of biological role, allows the formation of correctly charged Asn-tRNA(Asn) or Gln-tRNA(Gln) through the transamidation of misacylated Asp-tRNA(Asn) or Glu-tRNA(Gln) in organisms which lack either or both of asparaginyl-tRNA or glutaminyl-tRNA synthetases. The reaction takes place in the presence of glutamine and ATP through an activated phospho-Asp-tRNA(Asn) or phospho-Glu-tRNA(Gln). The polypeptide is Aspartyl/glutamyl-tRNA(Asn/Gln) amidotransferase subunit B (Coxiella burnetii (strain CbuK_Q154) (Coxiella burnetii (strain Q154))).